Here is a 158-residue protein sequence, read N- to C-terminus: Serglycin (158 aa).

Residues 1 to 27 form the signal peptide; the sequence is MMQKLLKCSRLVLALALILVLESSVQG. An intrachain disulfide couples C40 to C49. Residues S94 and S96 are each glycosylated (O-linked (Xyl...) (glycosaminoglycan) serine). Repeat copies occupy residues 94-95, 96-97, 98-99, 100-101, 102-103, 104-105, 106-107, 108-109, and 110-111. Positions 94 to 111 are 9 X 2 AA tandem repeats of [SF]-G; that stretch reads SGSGFGSGSGSGSGSGSG. O-linked (Xyl...) (glycosaminoglycan) serine glycosylation is found at S100, S102, S104, S106, S108, and S110. The tract at residues 134–158 is disordered; sequence RSLDRNLPSDSQDLGQHGLEEDFML.

This sequence belongs to the serglycin family. In terms of assembly, binds to activated CD44 and to GZMB. O-glycosylated; contains chondroitin sulfate and heparan sulfate.

It is found in the cytoplasmic granule. The protein localises to the cytolytic granule. The protein resides in the secreted. Its subcellular location is the extracellular space. It localises to the golgi apparatus. Its function is as follows. Plays a role in formation of mast cell secretory granules and mediates storage of various compounds in secretory vesicles. Required for storage of some proteases in both connective tissue and mucosal mast cells and for storage of granzyme B in T-lymphocytes. Plays a role in localizing neutrophil elastase in azurophil granules of neutrophils. Mediates processing of MMP2. Plays a role in cytotoxic cell granule-mediated apoptosis by forming a complex with granzyme B which is delivered to cells by perforin to induce apoptosis. Regulates the secretion of TNF-alpha and may also regulate protease secretion. Inhibits bone mineralization. The protein is Serglycin (SRGN) of Homo sapiens (Human).